A 290-amino-acid polypeptide reads, in one-letter code: Endo-1,4-beta-xylanase B (290 aa).

An N-terminal signal peptide occupies residues 1 to 19; the sequence is MVSFNSLLVAVSAATCALA. The N-linked (GlcNAc...) asparagine glycan is linked to N26. The GH11 domain maps to 34-222; it reads QSTPAGTGTN…SSGSSTVTVN (189 aa). Residue E118 is the Nucleophile of the active site. E209 serves as the catalytic Proton donor. The tract at residues 223–248 is disordered; that stretch reads PAGGVTSPIAPTGPSSVSTTPSGPSS. The segment covering 234–248 has biased composition (low complexity); the sequence is TGPSSVSTTPSGPSS. One can recognise a CBM1 domain in the interval 255–290; sequence TCSALYGQCGGQGWTGPTCCSSGTCKFSNNWYSQCL.

This sequence belongs to the glycosyl hydrolase 11 (cellulase G) family.

It localises to the secreted. It carries out the reaction Endohydrolysis of (1-&gt;4)-beta-D-xylosidic linkages in xylans.. The protein operates within glycan degradation; xylan degradation. Endo-1,4-beta-xylanase involved in the hydrolysis of xylan, a major structural heterogeneous polysaccharide found in plant biomass representing the second most abundant polysaccharide in the biosphere, after cellulose. The chain is Endo-1,4-beta-xylanase B (xynB) from Phanerodontia chrysosporium (White-rot fungus).